A 397-amino-acid chain; its full sequence is Tubby-like protein 8 (397 aa).

Basic and acidic residues predominate over residues 1-16 (MAGSRKVNDLLEENKG). The disordered stretch occupies residues 1–46 (MAGSRKVNDLLEENKGNVDTITGSLSTQKGEDKENVSPEKVSTSVE). Residues 17-28 (NVDTITGSLSTQ) show a composition bias toward polar residues.

Belongs to the TUB family. In terms of tissue distribution, mostly expressed in roots, flowers and siliques.

The polypeptide is Tubby-like protein 8 (Arabidopsis thaliana (Mouse-ear cress)).